A 257-amino-acid chain; its full sequence is Putative hydro-lyase Bcep18194_B2576 (257 aa).

It belongs to the D-glutamate cyclase family.

This is Putative hydro-lyase Bcep18194_B2576 from Burkholderia lata (strain ATCC 17760 / DSM 23089 / LMG 22485 / NCIMB 9086 / R18194 / 383).